Reading from the N-terminus, the 175-residue chain is RNA pyrophosphohydrolase (175 aa).

A Nudix hydrolase domain is found at 7-150; it reads GYRLNVGIIL…KRQVYIQALK (144 aa). Residues 39–60 carry the Nudix box motif; it reads GGLAPGETAMQAMYRELHEEVG.

Belongs to the Nudix hydrolase family. RppH subfamily. A divalent metal cation serves as cofactor.

Its function is as follows. Accelerates the degradation of transcripts by removing pyrophosphate from the 5'-end of triphosphorylated RNA, leading to a more labile monophosphorylated state that can stimulate subsequent ribonuclease cleavage. The chain is RNA pyrophosphohydrolase from Legionella pneumophila (strain Paris).